The following is a 1555-amino-acid chain: Phospholipid-transporting ATPase DNF1 (1555 aa).

Residues Met1–Arg85 are disordered. Residues Met1–Asn134 are Cytoplasmic-facing. Over residues Trp22–Leu37 the composition is skewed to basic residues. The segment covering Gly72–Ser82 has biased composition (low complexity). The helical transmembrane segment at Ile135–Val155 threads the bilayer. A topological domain (extracellular) is located at residue Asn156. Residues Pro157–Ile177 form a helical membrane-spanning segment. Residues Glu178–Asn491 are Cytoplasmic-facing. The segment at Thr257–His288 is disordered. Residues Val492–Ile512 form a helical membrane-spanning segment. Residues Ala513 to Gly537 lie on the Extracellular side of the membrane. A helical membrane pass occupies residues Phe538 to Ile558. The Cytoplasmic segment spans residues Ser559–Met1123. Residue Asp606 is the 4-aspartylphosphate intermediate of the active site. Asp606, Lys607, Thr608, Glu740, Phe781, Ser783, Lys786, Lys804, Arg839, Thr840, Thr919, Gly920, Asp921, Arg1031, and Lys1037 together coordinate ATP. Asp606 serves as a coordination point for Mg(2+). Residue Thr608 coordinates Mg(2+). Residue Asp1057 participates in Mg(2+) binding. ATP contacts are provided by Asn1060 and Asp1061. A Mg(2+)-binding site is contributed by Asp1061. The helical transmembrane segment at Ile1124–Phe1144 threads the bilayer. Residues Glu1145 to Tyr1146 are Extracellular-facing. The chain crosses the membrane as a helical span at residues Thr1147 to Leu1167. Topologically, residues Asp1168–Tyr1200 are cytoplasmic. The helical transmembrane segment at Met1201 to Leu1221 threads the bilayer. At Thr1222–Arg1237 the chain is on the extracellular side. Residues Leu1238–Thr1258 traverse the membrane as a helical segment. The Cytoplasmic segment spans residues Tyr1259 to Asp1262. A helical transmembrane segment spans residues Trp1263–Tyr1283. Topologically, residues Thr1284–Glu1302 are extracellular. Residues Leu1303–Val1323 traverse the membrane as a helical segment. Residue Arg1320 coordinates a 1,2-diacyl-sn-glycero-3-phospho-L-serine. The Cytoplasmic segment spans residues Lys1324–Met1555. 2 disordered regions span residues Val1364 to Arg1456 and Glu1489 to Met1555. A compositionally biased stretch (polar residues) spans Ala1406–Gln1432. 2 stretches are compositionally biased toward basic and acidic residues: residues Pro1436–Arg1456 and Lys1540–Met1555.

This sequence belongs to the cation transport ATPase (P-type) (TC 3.A.3) family. Type IV subfamily. Component of a flippase complex consisting of DNF1 and CDC50. Interacts with CDC50; the interaction is direct. Requires Mg(2+) as cofactor.

Its subcellular location is the cell membrane. The protein resides in the endosome membrane. It is found in the golgi apparatus. It localises to the trans-Golgi network membrane. The enzyme catalyses ATP + H2O + phospholipidSide 1 = ADP + phosphate + phospholipidSide 2.. It catalyses the reaction a 1,2-diacyl-sn-glycero-3-phosphoethanolamine(out) + ATP + H2O = a 1,2-diacyl-sn-glycero-3-phosphoethanolamine(in) + ADP + phosphate + H(+). The catalysed reaction is a 1,2-diacyl-sn-glycero-3-phosphocholine(out) + ATP + H2O = a 1,2-diacyl-sn-glycero-3-phosphocholine(in) + ADP + phosphate + H(+). It carries out the reaction a beta-D-glucosyl-(1&lt;-&gt;1')-N-acylsphing-4-enine(out) + ATP + H2O = a beta-D-glucosyl-(1&lt;-&gt;1')-N-acylsphing-4-enine(in) + ADP + phosphate + H(+). The enzyme catalyses a 1,2-diacyl-sn-glycero-3-phospho-L-serine(out) + ATP + H2O = a 1,2-diacyl-sn-glycero-3-phospho-L-serine(in) + ADP + phosphate + H(+). Its function is as follows. Catalytic component of a P4-ATPase flippase complex which catalyzes the hydrolysis of ATP coupled to the transport of phosphatidylcholine and phosphatidylserine from the lumenal to the cytosolic leaflet of membranes and ensures the maintenance of asymmetric distribution of phospholipids. May also transport glucosylceramide and phosphatidylethanolamine. This is Phospholipid-transporting ATPase DNF1 from Chaetomium thermophilum (strain DSM 1495 / CBS 144.50 / IMI 039719) (Thermochaetoides thermophila).